The following is a 431-amino-acid chain: CinA-like protein (431 aa).

This sequence belongs to the CinA family.

This chain is CinA-like protein, found in Chlorobium luteolum (strain DSM 273 / BCRC 81028 / 2530) (Pelodictyon luteolum).